The chain runs to 359 residues: Acetoin catabolism protein X (359 aa).

It localises to the cell membrane. It functions in the pathway ketone degradation; acetoin degradation. In terms of biological role, essential for acetoin catabolism. The protein is Acetoin catabolism protein X (acoX) of Cupriavidus necator (strain ATCC 17699 / DSM 428 / KCTC 22496 / NCIMB 10442 / H16 / Stanier 337) (Ralstonia eutropha).